Consider the following 359-residue polypeptide: 3-dehydroquinate synthase (359 aa).

NAD(+) is bound by residues 71 to 76, 105 to 109, 129 to 130, Lys142, Lys151, and 169 to 172; these read DGEAHK, GVIGD, TT, and TLHT. Positions 184, 247, and 264 each coordinate Zn(2+).

This sequence belongs to the sugar phosphate cyclases superfamily. Dehydroquinate synthase family. Requires Co(2+) as cofactor. Zn(2+) is required as a cofactor. It depends on NAD(+) as a cofactor.

It is found in the cytoplasm. The catalysed reaction is 7-phospho-2-dehydro-3-deoxy-D-arabino-heptonate = 3-dehydroquinate + phosphate. Its pathway is metabolic intermediate biosynthesis; chorismate biosynthesis; chorismate from D-erythrose 4-phosphate and phosphoenolpyruvate: step 2/7. In terms of biological role, catalyzes the conversion of 3-deoxy-D-arabino-heptulosonate 7-phosphate (DAHP) to dehydroquinate (DHQ). The chain is 3-dehydroquinate synthase from Neisseria gonorrhoeae (strain ATCC 700825 / FA 1090).